A 204-amino-acid chain; its full sequence is Outer-membrane lipoprotein LolB (204 aa).

A signal peptide spans 1-20 (MLRSRRLALLCLATPLWLAA). Cys-21 is lipidated: N-palmitoyl cysteine. Cys-21 is lipidated: S-diacylglycerol cysteine. A disordered region spans residues 131-150 (GRAAPGTPSNVTRDANGRPD).

The protein belongs to the LolB family. As to quaternary structure, monomer.

It localises to the cell outer membrane. Functionally, plays a critical role in the incorporation of lipoproteins in the outer membrane after they are released by the LolA protein. The protein is Outer-membrane lipoprotein LolB of Cupriavidus metallidurans (strain ATCC 43123 / DSM 2839 / NBRC 102507 / CH34) (Ralstonia metallidurans).